A 395-amino-acid polypeptide reads, in one-letter code: Phosphoprotein (395 aa).

Disordered stretches follow at residues Val31 to Leu109 and Asn126 to Val214. Positions Thr65–Lys74 are enriched in basic and acidic residues. Polar residues-rich tracts occupy residues Gln75 to Thr98, Leu146 to Ala168, and Ser203 to Ala212. The multimerization stretch occupies residues Asp222–Gly285.

The protein belongs to the rubulavirus/avulavirus P protein family. Homotetramer. Interacts (via multimerization domain) with polymerase L; this interaction forms the polymerase L-P complex. Interacts (via N-terminus) with N0 (via Ncore); this interaction allows P to chaperon N0 to avoid N polymerization before encapsidation. Interacts (via C-terminus) with N-RNA template; this interaction positions the polymerase on the template for both transcription and replication.

Its function is as follows. Essential cofactor of the RNA polymerase L that plays a central role in the transcription and replication by forming the polymerase complex with RNA polymerase L and recruiting L to the genomic N-RNA template for RNA synthesis. Also plays a central role in the encapsidation of nascent RNA chains by forming the encapsidation complex with the nucleocapsid protein N (N-P complex). Acts as a chaperone for newly synthesized free N protein, so-called N0, allowing encapsidation of nascent RNA chains during replication. The nucleoprotein protein N prevents excessive phosphorylation of P, which leads to down-regulation of viral transcription/ replication. Participates, together with N, in the formation of viral factories (viroplasms), which are large inclusions in the host cytoplasm where replication takes place. The polypeptide is Phosphoprotein (P/C) (Gallus gallus (Chicken)).